Reading from the N-terminus, the 213-residue chain is Uracil phosphoribosyltransferase (213 aa).

Residues R78, R103, and 130 to 138 each bind 5-phospho-alpha-D-ribose 1-diphosphate; that span reads DPMLATGGS. Uracil-binding positions include I193 and 198–200; that span reads GDA. A 5-phospho-alpha-D-ribose 1-diphosphate-binding site is contributed by D199.

The protein belongs to the UPRTase family. It depends on Mg(2+) as a cofactor.

The catalysed reaction is UMP + diphosphate = 5-phospho-alpha-D-ribose 1-diphosphate + uracil. The protein operates within pyrimidine metabolism; UMP biosynthesis via salvage pathway; UMP from uracil: step 1/1. With respect to regulation, allosterically activated by GTP. Its function is as follows. Catalyzes the conversion of uracil and 5-phospho-alpha-D-ribose 1-diphosphate (PRPP) to UMP and diphosphate. This is Uracil phosphoribosyltransferase from Bordetella pertussis (strain Tohama I / ATCC BAA-589 / NCTC 13251).